Here is a 380-residue protein sequence, read N- to C-terminus: Cytochrome b (380 aa).

4 consecutive transmembrane segments (helical) span residues 33-53 (FGSL…FLAM), 77-98 (WLIR…YLHV), 113-133 (WNIG…GYVL), and 178-198 (FFAF…LHLL). Residues histidine 83 and histidine 97 each contribute to the heme b site. Positions 182 and 196 each coordinate heme b. Histidine 201 serves as a coordination point for a ubiquinone. Transmembrane regions (helical) follow at residues 226-246 (YKDL…TLFS), 288-308 (LGGV…PLLH), 320-340 (LTQI…WIGG), and 347-367 (FITV…ILIP).

It belongs to the cytochrome b family. The cytochrome bc1 complex contains 3 respiratory subunits (MT-CYB, CYC1 and UQCRFS1), 2 core proteins (UQCRC1 and UQCRC2) and probably 6 low-molecular weight proteins. Heme b serves as cofactor.

It is found in the mitochondrion inner membrane. Functionally, component of the ubiquinol-cytochrome c reductase complex (complex III or cytochrome b-c1 complex) that is part of the mitochondrial respiratory chain. The b-c1 complex mediates electron transfer from ubiquinol to cytochrome c. Contributes to the generation of a proton gradient across the mitochondrial membrane that is then used for ATP synthesis. This chain is Cytochrome b (mt-cyb), found in Allocyttus niger (Black oreo dory).